Consider the following 919-residue polypeptide: MKVARFQKIPNGENETMIPVLTSKKASELPVSEVASILQADLQNGLNKCEVSHRRAFHGWNEFDISEDEPLWKKYISQFKNPLIMLLLASAVISVLMHQFDDAVSITVAILIVVTVAFVQEYRSEKSLEELSKLVPPECHCVREGKLEHTLARDLVPGDTVCLSVGDRVPADLRLFEAVDLSIDESSLTGETTPCSKVTAPQPAATNGDLASRSNIAFMGTLVRCGKAKGVVIGTGENSEFGEVFKMMQAEEAPKTPLQKSMDLLGKQLSFYSFGIIGIIMLVGWLLGKDILEMFTISVSLAVAAIPEGLPIVVTVTLALGVMRMVKKRAIVKKLPIVETLGCCNVICSDKTGTLTKNEMTVTHIFTSDGLHAEVTGVGYNQFGEVIVDGDVVHGFYNPAVSRIVEAGCVCNDAVIRNNTLMGKPTEGALIALAMKMGLDGLQQDYIRKAEYPFSSEQKWMAVKCVHRTQQDRPEICFMKGAYEQVIKYCTTYQSKGQTLTLTQQQRDVYQQEKARMGSAGLRVLALASGPELGQLTFLGLVGIIDPPRTGVKEAVTTLIASGVSIKMITGDSQETAVAIASRLGLYSKTSQSVSGEEIDAMDVQQLSQIVPKVAVFYRASPRHKMKIIKSLQKNGSVVAMTGDGVNDAVALKAADIGVAMGQTGTDVCKEAADMILVDDDFQTIMSAIEEGKGIYNNIKNFVRFQLSTSIAALTLISLATLMNFPNPLNAMQILWINIIMDGPPAQSLGVEPVDKDVIRKPPRNWKDSILTKNLILKILVSSIIIVCGTLFVFWRELRDNVITPRDTTMTFTCFVFFDMFNALSSRSQTKSVFEIGLCSNRMFCYAVLGSIMGQLLVIYFPPLQKVFQTESLSILDLLFLLGLTSSVCIVAEIIKKVERSREKIQKHVSSTSSSFLEV.

Residues 1–70 are Cytoplasmic-facing; the sequence is MKVARFQKIP…NEFDISEDEP (70 aa). The helical transmembrane segment at 71–91 threads the bilayer; sequence LWKKYISQFKNPLIMLLLASA. Residues 92–104 are Lumenal-facing; the sequence is VISVLMHQFDDAV. A helical membrane pass occupies residues 105–123; sequence SITVAILIVVTVAFVQEYR. Topologically, residues 124-262 are cytoplasmic; that stretch reads SEKSLEELSK…APKTPLQKSM (139 aa). The helical transmembrane segment at 263–282 threads the bilayer; that stretch reads DLLGKQLSFYSFGIIGIIML. The Lumenal segment spans residues 283–294; it reads VGWLLGKDILEM. The chain crosses the membrane as a helical span at residues 295 to 312; sequence FTISVSLAVAAIPEGLPI. Ca(2+)-binding residues include Val303, Ala304, Ile306, and Glu308. The Cytoplasmic portion of the chain corresponds to 313–699; sequence VVTVTLALGV…EEGKGIYNNI (387 aa). Catalysis depends on Asp350, which acts as the 4-aspartylphosphate intermediate. Asp644 and Asp648 together coordinate Mg(2+). A helical transmembrane segment spans residues 700–719; it reads KNFVRFQLSTSIAALTLISL. At 720–729 the chain is on the lumenal side; it reads ATLMNFPNPL. Residues 730-750 form a helical membrane-spanning segment; it reads NAMQILWINIIMDGPPAQSLG. The Ca(2+) site is built by Asn738 and Asp742. Residues 751 to 770 are Cytoplasmic-facing; the sequence is VEPVDKDVIRKPPRNWKDSI. A helical transmembrane segment spans residues 771–793; that stretch reads LTKNLILKILVSSIIIVCGTLFV. At 794–808 the chain is on the lumenal side; that stretch reads FWRELRDNVITPRDT. The chain crosses the membrane as a helical span at residues 809–828; sequence TMTFTCFVFFDMFNALSSRS. Residues 829–841 are Cytoplasmic-facing; sequence QTKSVFEIGLCSN. Residues 842 to 860 traverse the membrane as a helical segment; the sequence is RMFCYAVLGSIMGQLLVIY. The Lumenal portion of the chain corresponds to 861–875; it reads FPPLQKVFQTESLSI. A helical transmembrane segment spans residues 876–896; that stretch reads LDLLFLLGLTSSVCIVAEIIK. Residues 897-919 are Cytoplasmic-facing; that stretch reads KVERSREKIQKHVSSTSSSFLEV.

It belongs to the cation transport ATPase (P-type) (TC 3.A.3) family. Type IIA subfamily. Monomer. Homodimer. In terms of tissue distribution, found in most tissues except colon, thymus, spleen and leukocytes. Expressed in keratinocytes (at protein level).

Its subcellular location is the golgi apparatus. It localises to the trans-Golgi network membrane. The protein localises to the golgi stack membrane. It catalyses the reaction Ca(2+)(in) + ATP + H2O = Ca(2+)(out) + ADP + phosphate + H(+). It carries out the reaction Mn(2+)(in) + ATP + H2O = Mn(2+)(out) + ADP + phosphate + H(+). In terms of biological role, ATP-driven pump that supplies the Golgi apparatus with Ca(2+) and Mn(2+) ions, both essential cofactors for processing and trafficking of newly synthesized proteins in the secretory pathway. Within a catalytic cycle, acquires Ca(2+) or Mn(2+) ions on the cytoplasmic side of the membrane and delivers them to the lumenal side. The transfer of ions across the membrane is coupled to ATP hydrolysis and is associated with a transient phosphorylation that shifts the pump conformation from inward-facing to outward-facing state. Plays a primary role in the maintenance of Ca(2+) homeostasis in the trans-Golgi compartment with a functional impact on Golgi and post-Golgi protein sorting as well as a structural impact on cisternae morphology. Responsible for loading the Golgi stores with Ca(2+) ions in keratinocytes, contributing to keratinocyte differentiation and epidermis integrity. Participates in Ca(2+) and Mn(2+) ions uptake into the Golgi store of hippocampal neurons and regulates protein trafficking required for neural polarity. May also play a role in the maintenance of Ca(2+) and Mn(2+) homeostasis and signaling in the cytosol while preventing cytotoxicity. This is Calcium-transporting ATPase type 2C member 1 from Homo sapiens (Human).